We begin with the raw amino-acid sequence, 616 residues long: Spastin (616 aa).

A disordered region spans residues 1 to 43; sequence MNSPGGRGKKKGSGGASNPVPPRPPPPCLAPAPPAAGPAPPPE. The interval 1 to 50 is required for nuclear localization; it reads MNSPGGRGKKKGSGGASNPVPPRPPPPCLAPAPPAAGPAPPPESPHKRNL. The Cytoplasmic segment spans residues 1 to 56; sequence MNSPGGRGKKKGSGGASNPVPPRPPPPCLAPAPPAAGPAPPPESPHKRNLYYFSYP. The segment at 1–80 is required for interaction with ATL1; it reads MNSPGGRGKK…LGLLFVWLCQ (80 aa). Residues 1–194 are required for midbody localization; it reads MNSPGGRGKK…LVMAKDRLQL (194 aa). The interval 1-300 is required for interaction with RTN1; the sequence is MNSPGGRGKK…GTPKTNRTNK (300 aa). Residues 4 to 11 carry the Nuclear localization signal motif; it reads PGGRGKKK. Over residues 19–43 the composition is skewed to pro residues; that stretch reads PVPPRPPPPCLAPAPPAAGPAPPPE. The tract at residues 50–87 is required for interaction with SSNA1 and microtubules; the sequence is LYYFSYPLFVGFALLRLVAFHLGLLFVWLCQRFSRALM. Residues 57 to 77 constitute an intramembrane region (helical); it reads LFVGFALLRLVAFHLGLLFVW. The Nuclear export signal motif lies at 59-67; it reads VGFALLRLV. The Cytoplasmic segment spans residues 78–616; the sequence is LCQRFSRALM…WNKDFGDTTV (539 aa). A sufficient for interaction with CHMP1B region spans residues 112-196; that stretch reads EAERVRVFHK…MAKDRLQLLE (85 aa). The segment at 114 to 200 is required for interaction with microtubules; it reads ERVRVFHKQA…RLQLLEKMQP (87 aa). One can recognise an MIT domain in the interval 120-195; it reads HKQAFEYISI…VMAKDRLQLL (76 aa). The tract at residues 224-266 is disordered; sequence HLQSESGAVPKRKDPLTHTSNSLPRSKTVMKTGSAGLSGHHRA. The segment at 228 to 616 is sufficient for microtubule severing; sequence ESGAVPKRKD…WNKDFGDTTV (389 aa). The segment covering 240–254 has biased composition (polar residues); it reads THTSNSLPRSKTVMK. Phosphoserine is present on residues serine 245 and serine 268. Residues 270 to 328 are required for interaction with microtubules and microtubule severing; that stretch reads SGLSMVSGVKQGSGPAPTTHKGTPKTNRTNKPSTPTTATRKKKDLKNFRNVDSNLANLI. The interval 278-312 is disordered; the sequence is VKQGSGPAPTTHKGTPKTNRTNKPSTPTTATRKKK. Residues 289-307 show a composition bias toward polar residues; it reads HKGTPKTNRTNKPSTPTTA. Threonine 306 carries the phosphothreonine modification. The Nuclear localization signal signature appears at 309–312; that stretch reads RKKK. Residues 310 to 312 are required for interaction with microtubules; sequence KKK. Residue 382–389 participates in ATP binding; sequence GPPGNGKT. Residue serine 597 is modified to Phosphoserine.

Belongs to the AAA ATPase family. Spastin subfamily. In terms of assembly, homohexamer. Mostly monomeric, but assembles into hexameric structure for short periods of time. Oligomerization seems to be a prerequisite for catalytic activity. Binding to ATP in a cleft between two adjacent subunits stabilizes the homohexameric form. Binds to microtubules at least in part via the alpha-tubulin and beta-tubulin tails. The hexamer adopts a ring conformation through which microtubules pass prior to being severed. Does not interact strongly with tubulin heterodimers. Interacts (via MIT domain) with CHMP1B; the interaction is direct. Interacts with SSNA1. Interacts with ATL1. Interacts with RTN1. Interacts with ZFYVE27. Isoform 1 but not isoform 3 interacts with RTN2. Interacts with REEP1. Interacts (via MIT domain) with IST1. Expressed in brain, heart, kidney, liver, lung, pancreas, placenta and skeletal muscle. The short isoforms may predominate in brain and spinal cord.

It is found in the membrane. It localises to the endoplasmic reticulum. Its subcellular location is the midbody. The protein localises to the cytoplasm. The protein resides in the cytoskeleton. It is found in the microtubule organizing center. It localises to the centrosome. Its subcellular location is the perinuclear region. The protein localises to the nucleus. The protein resides in the spindle. It is found in the cell projection. It localises to the axon. Its subcellular location is the endoplasmic reticulum membrane. The protein localises to the nucleus membrane. The protein resides in the lipid droplet. It is found in the endosome. It catalyses the reaction n ATP + n H2O + a microtubule = n ADP + n phosphate + (n+1) alpha/beta tubulin heterodimers.. Allosteric enzyme with a cooperative mechanism; at least two neighbor subunits influence each other strongly in spastin hexamers. Microtubule binding promotes cooperative interactions among spastin subunits. ATP-bound enzyme interacts strongly and cooperatively with microtubules; this interaction stimulates ATP hydrolysis. Functionally, ATP-dependent microtubule severing protein that specifically recognizes and cuts microtubules that are polyglutamylated. Preferentially recognizes and acts on microtubules decorated with short polyglutamate tails: severing activity increases as the number of glutamates per tubulin rises from one to eight, but decreases beyond this glutamylation threshold. Severing activity is not dependent on tubulin acetylation or detyrosination. Microtubule severing promotes reorganization of cellular microtubule arrays and the release of microtubules from the centrosome following nucleation. It is critical for the biogenesis and maintenance of complex microtubule arrays in axons, spindles and cilia. SPAST is involved in abscission step of cytokinesis and nuclear envelope reassembly during anaphase in cooperation with the ESCRT-III complex. Recruited at the midbody, probably by IST1, and participates in membrane fission during abscission together with the ESCRT-III complex. Recruited to the nuclear membrane by IST1 and mediates microtubule severing, promoting nuclear envelope sealing and mitotic spindle disassembly during late anaphase. Required for membrane traffic from the endoplasmic reticulum (ER) to the Golgi and endosome recycling. Recruited by IST1 to endosomes and regulates early endosomal tubulation and recycling by mediating microtubule severing. Probably plays a role in axon growth and the formation of axonal branches. Its function is as follows. Involved in lipid metabolism by regulating the size and distribution of lipid droplets. The sequence is that of Spastin from Homo sapiens (Human).